The chain runs to 82 residues: Acyl carrier protein (82 aa).

The 76-residue stretch at 4 to 79 folds into the Carrier domain; the sequence is PEMESRLKKI…DALNYIEQKL (76 aa). An O-(pantetheine 4'-phosphoryl)serine modification is found at serine 39.

This sequence belongs to the acyl carrier protein (ACP) family. 4'-phosphopantetheine is transferred from CoA to a specific serine of apo-ACP by AcpS. This modification is essential for activity because fatty acids are bound in thioester linkage to the sulfhydryl of the prosthetic group.

The protein resides in the cytoplasm. Its pathway is lipid metabolism; fatty acid biosynthesis. Its function is as follows. Carrier of the growing fatty acid chain in fatty acid biosynthesis. In Roseiflexus sp. (strain RS-1), this protein is Acyl carrier protein.